Reading from the N-terminus, the 218-residue chain is Protein GrpE (218 aa).

The interval Met-1 to Gly-75 is disordered. Residues Ser-23–Glu-40 are compositionally biased toward basic and acidic residues. Residues Ser-48–Gly-75 are compositionally biased toward acidic residues.

This sequence belongs to the GrpE family. In terms of assembly, homodimer.

The protein localises to the cytoplasm. Functionally, participates actively in the response to hyperosmotic and heat shock by preventing the aggregation of stress-denatured proteins, in association with DnaK and GrpE. It is the nucleotide exchange factor for DnaK and may function as a thermosensor. Unfolded proteins bind initially to DnaJ; upon interaction with the DnaJ-bound protein, DnaK hydrolyzes its bound ATP, resulting in the formation of a stable complex. GrpE releases ADP from DnaK; ATP binding to DnaK triggers the release of the substrate protein, thus completing the reaction cycle. Several rounds of ATP-dependent interactions between DnaJ, DnaK and GrpE are required for fully efficient folding. The protein is Protein GrpE of Corynebacterium glutamicum (strain ATCC 13032 / DSM 20300 / JCM 1318 / BCRC 11384 / CCUG 27702 / LMG 3730 / NBRC 12168 / NCIMB 10025 / NRRL B-2784 / 534).